Reading from the N-terminus, the 309-residue chain is Methionyl-tRNA formyltransferase (309 aa).

S107–P110 contacts (6S)-5,6,7,8-tetrahydrofolate.

This sequence belongs to the Fmt family.

The catalysed reaction is L-methionyl-tRNA(fMet) + (6R)-10-formyltetrahydrofolate = N-formyl-L-methionyl-tRNA(fMet) + (6S)-5,6,7,8-tetrahydrofolate + H(+). In terms of biological role, attaches a formyl group to the free amino group of methionyl-tRNA(fMet). The formyl group appears to play a dual role in the initiator identity of N-formylmethionyl-tRNA by promoting its recognition by IF2 and preventing the misappropriation of this tRNA by the elongation apparatus. The polypeptide is Methionyl-tRNA formyltransferase (Borrelia recurrentis (strain A1)).